A 391-amino-acid polypeptide reads, in one-letter code: Elongation factor Tu (391 aa).

In terms of domain architecture, tr-type G spans 10-201; it reads KPHVNIGTIG…AVDDYIPTPE (192 aa). The tract at residues 19-26 is G1; it reads GHVDHGKT. A GTP-binding site is contributed by 19 to 26; sequence GHVDHGKT. T26 is a Mg(2+) binding site. The tract at residues 55–59 is G2; that stretch reads GITIS. Residues 76 to 79 are G3; sequence DCPG. GTP is bound by residues 76-80 and 131-134; these read DCPGH and NKVD. The segment at 131–134 is G4; sequence NKVD. Residues 169–171 form a G5 region; sequence SAL.

This sequence belongs to the TRAFAC class translation factor GTPase superfamily. Classic translation factor GTPase family. EF-Tu/EF-1A subfamily. In terms of assembly, monomer.

Its subcellular location is the cytoplasm. It catalyses the reaction GTP + H2O = GDP + phosphate + H(+). GTP hydrolase that promotes the GTP-dependent binding of aminoacyl-tRNA to the A-site of ribosomes during protein biosynthesis. This Paracoccus denitrificans (strain Pd 1222) protein is Elongation factor Tu.